A 293-amino-acid chain; its full sequence is sn-glycerol-3-phosphate transport system permease protein UgpA (293 aa).

The next 6 membrane-spanning stretches (helical) occupy residues 10-30 (ILPY…FFWP), 72-92 (VTVI…LLLA), 108-128 (LLIW…LFMF), 156-176 (MILI…LFFV), 204-224 (IIFP…TVYA), and 261-281 (LGSS…LTAF). In terms of domain architecture, ABC transmembrane type-1 spans 66–282 (YLNSLKVTVI…AIVIGLTAFQ (217 aa)).

The protein belongs to the binding-protein-dependent transport system permease family. As to quaternary structure, the complex is composed of two ATP-binding proteins (UgpC), two transmembrane proteins (UgpA and UgpE) and a solute-binding protein (UgpB).

It localises to the cell inner membrane. In terms of biological role, part of the ABC transporter complex UgpBAEC involved in sn-glycerol-3-phosphate (G3P) import. Probably responsible for the translocation of the substrate across the membrane. The chain is sn-glycerol-3-phosphate transport system permease protein UgpA (ugpA) from Rhizobium meliloti (strain 1021) (Ensifer meliloti).